The primary structure comprises 305 residues: Mitochondrial citrate transporter D (305 aa).

3 Solcar repeats span residues 10-101 (LPFG…WGAF), 111-197 (QTQS…VRAQ), and 211-298 (RNDL…VMDF). 6 consecutive transmembrane segments (helical) span residues 16–36 (FIAGAVAGVSEILVMYPLDVV), 78–98 (SAPILMEAPKRATKFAANDSW), 118–137 (LTGATAGATESFVVVPFELV), 176–196 (TLWRHILWNSGYFGCIFQVRA), 208–228 (QQTRNDLIAGTIGGTAGTILN), and 270–291 (LYKGFLPKVLRLGPGGGILLVV).

This sequence belongs to the mitochondrial carrier (TC 2.A.29) family.

Its subcellular location is the mitochondrion inner membrane. It catalyses the reaction citrate(in) + H(+)(in) = citrate(out) + H(+)(out). Functionally, mitochondrial transporter that mediates citrate export from mitochondria to cytoplasm. Both ctpA, ctpB, and ctpD play important roles in citric acid transport across the mitochondrial membrane and function in a redundant manner. This chain is Mitochondrial citrate transporter D, found in Aspergillus niger (strain ATCC 1015 / CBS 113.46 / FGSC A1144 / LSHB Ac4 / NCTC 3858a / NRRL 328 / USDA 3528.7).